We begin with the raw amino-acid sequence, 377 residues long: Chaperone protein DnaJ (377 aa).

One can recognise a J domain in the interval 5–69 (EYYDRLGVSK…QKRAAYDQYG (65 aa)). Residues 133–215 (GTEKEVHYNR…CHGTGHEKQS (83 aa)) form a CR-type zinc finger. The Zn(2+) site is built by cysteine 146, cysteine 149, cysteine 163, cysteine 166, cysteine 189, cysteine 192, cysteine 203, and cysteine 206. 4 CXXCXGXG motif repeats span residues 146–153 (CHTCNGSG), 163–170 (CSKCHGSG), 189–196 (CDVCHGTG), and 203–210 (CPTCHGTG).

The protein belongs to the DnaJ family. In terms of assembly, homodimer. The cofactor is Zn(2+).

The protein localises to the cytoplasm. Its function is as follows. Participates actively in the response to hyperosmotic and heat shock by preventing the aggregation of stress-denatured proteins and by disaggregating proteins, also in an autonomous, DnaK-independent fashion. Unfolded proteins bind initially to DnaJ; upon interaction with the DnaJ-bound protein, DnaK hydrolyzes its bound ATP, resulting in the formation of a stable complex. GrpE releases ADP from DnaK; ATP binding to DnaK triggers the release of the substrate protein, thus completing the reaction cycle. Several rounds of ATP-dependent interactions between DnaJ, DnaK and GrpE are required for fully efficient folding. Also involved, together with DnaK and GrpE, in the DNA replication of plasmids through activation of initiation proteins. This chain is Chaperone protein DnaJ, found in Streptococcus mutans serotype c (strain ATCC 700610 / UA159).